The primary structure comprises 476 residues: Serine--tRNA ligase (476 aa).

280-282 (TAE) lines the L-serine pocket. Residue 311–313 (RAE) coordinates ATP. Residue Glu-334 coordinates L-serine. 401–404 (EISS) provides a ligand contact to ATP. Ser-436 is an L-serine binding site.

This sequence belongs to the class-II aminoacyl-tRNA synthetase family. Type-1 seryl-tRNA synthetase subfamily. Homodimer. The tRNA molecule binds across the dimer.

The protein resides in the cytoplasm. The enzyme catalyses tRNA(Ser) + L-serine + ATP = L-seryl-tRNA(Ser) + AMP + diphosphate + H(+). It carries out the reaction tRNA(Sec) + L-serine + ATP = L-seryl-tRNA(Sec) + AMP + diphosphate + H(+). Its pathway is aminoacyl-tRNA biosynthesis; selenocysteinyl-tRNA(Sec) biosynthesis; L-seryl-tRNA(Sec) from L-serine and tRNA(Sec): step 1/1. In terms of biological role, catalyzes the attachment of serine to tRNA(Ser). Is also able to aminoacylate tRNA(Sec) with serine, to form the misacylated tRNA L-seryl-tRNA(Sec), which will be further converted into selenocysteinyl-tRNA(Sec). The chain is Serine--tRNA ligase from Rhodopseudomonas palustris (strain HaA2).